A 414-amino-acid chain; its full sequence is Protein ABHD18 (414 aa).

Positions Met-1–Gly-24 are cleaved as a signal peptide. Asn-282 and Asn-307 each carry an N-linked (GlcNAc...) asparagine glycan.

This sequence belongs to the AB hydrolase superfamily.

Its subcellular location is the secreted. The protein is Protein ABHD18 of Homo sapiens (Human).